The sequence spans 420 residues: Probable 3-isopropylmalate dehydratase large subunit (420 aa).

[4Fe-4S] cluster-binding residues include C301, C361, and C364.

Belongs to the aconitase/IPM isomerase family. LeuC type 2 subfamily. As to quaternary structure, heterodimer of LeuC and LeuD. [4Fe-4S] cluster is required as a cofactor.

It catalyses the reaction (2R,3S)-3-isopropylmalate = (2S)-2-isopropylmalate. It functions in the pathway amino-acid biosynthesis; L-leucine biosynthesis; L-leucine from 3-methyl-2-oxobutanoate: step 2/4. Its function is as follows. Catalyzes the isomerization between 2-isopropylmalate and 3-isopropylmalate, via the formation of 2-isopropylmaleate. This is Probable 3-isopropylmalate dehydratase large subunit from Methanosarcina mazei (strain ATCC BAA-159 / DSM 3647 / Goe1 / Go1 / JCM 11833 / OCM 88) (Methanosarcina frisia).